The sequence spans 394 residues: MSRELHDVDLAEVKPLVEKGESITGLLQEFDVQEQDIETLHGSLHVTLCGTPKGNRPVILTYHDIGMNHKTCYNPLFNSEDMQEITQHFAVCHVDAPGQQDGAPSFPVGYMYPSMDQLAEMLPGVLHQFGLKSVIGMGTGAGAYILTRFALNNPEMVEGLVLMNVNPCAEGWMDWAASKISGWTQALPDMVVSHLFGKEEIHNNVEVVHTYRQHILNDMNPSNLHLFISAYNSRRDLEIERPMPGTHTVTLQCPALLVVGDNSPAVDAVVECNSKLDPTKTTLLKMADCGGLPQISQPAKLAEAFKYFVQGMGYMPSASMTRLMRSRTASGSSVTSLEGTRSRSHTSEGPRSRSHTSEGSRSRSHTSEDARLNITPNSGATGNNAGPKSMEVSC.

At serine 2 the chain carries N-acetylserine. A phosphoserine mark is found at serine 2, serine 319, and serine 326. The segment at 325–394 is disordered; it reads RSRTASGSSV…AGPKSMEVSC (70 aa). Polar residues predominate over residues 327-339; sequence RTASGSSVTSLEG. Residue threonine 328 is modified to Phosphothreonine. Serine 330 carries the phosphoserine; by SGK1 modification. Residues serine 332 and serine 333 each carry the phosphoserine modification. Threonine 335 bears the Phosphothreonine mark. Residue serine 336 is modified to Phosphoserine. Tandem repeats lie at residues 339–348, 349–358, and 359–368. The segment at 339-368 is 3 X 10 AA tandem repeats of G-[PST]-R-S-R-S-H-T-S-E; sequence GTRSRSHTSEGPRSRSHTSEGSRSRSHTSE. A Phosphothreonine modification is found at threonine 340. Serine 342 is modified (phosphoserine). The span at 345–371 shows a compositional bias: basic and acidic residues; sequence HTSEGPRSRSHTSEGSRSRSHTSEDAR. Threonine 346 is modified (phosphothreonine; by SGK1). Position 352 is a phosphoserine (serine 352). Threonine 356 bears the Phosphothreonine; by SGK1 mark. Phosphoserine is present on residues serine 362 and serine 364. Threonine 366 is modified (phosphothreonine; by SGK1). A compositionally biased stretch (polar residues) spans 374-386; sequence ITPNSGATGNNAG. Threonine 375 carries the phosphothreonine modification.

The protein belongs to the NDRG family. As to quaternary structure, interacts with RAB4A (membrane-bound form); the interaction involves NDRG1 in vesicular recycling of CDH1. Interacts with APOA1, APOA2, PRA1 and RTN1. In terms of processing, under stress conditions, phosphorylated in the C-terminal on many serine and threonine residues. Phosphorylated in vitro by PKA. Phosphorylation enhanced by increased intracellular cAMP levels. Homocysteine induces dephosphorylation. Phosphorylation by SGK1 is cell cycle dependent. As to expression, widely expressed, with highest levels in kidney followed by brain, pancreas, small intestine, colon and spleen (at protein level). Also detected in heart and preputial gland, and in much smaller quantities in other tissues. Not detected in duodenum and prostate. Highly expressed in Schwann cells.

It is found in the cytoplasm. The protein resides in the cytosol. It localises to the cytoskeleton. Its subcellular location is the microtubule organizing center. The protein localises to the centrosome. It is found in the nucleus. The protein resides in the cell membrane. Functionally, stress-responsive protein involved in hormone responses, cell growth, and differentiation. Acts as a tumor suppressor in many cell types. Necessary but not sufficient for p53/TP53-mediated caspase activation and apoptosis. Required for vesicular recycling of CDH1 and TF. May also function in lipid trafficking. Protects cells from spindle disruption damage. Functions in p53/TP53-dependent mitotic spindle checkpoint. Regulates microtubule dynamics and maintains euploidy. Has a role in cell trafficking notably of the Schwann cell and is necessary for the maintenance and development of the peripheral nerve myelin sheath. The chain is Protein NDRG1 (Ndrg1) from Mus musculus (Mouse).